A 985-amino-acid chain; its full sequence is Tudor domain-containing protein 5 (985 aa).

Residues 7-80 (VQECLRKEIR…DGTIILRAIP (74 aa)) enclose the HTH OST-type 1 domain. A disordered region spans residues 98–119 (HKVRNSMQKGRPSVCSGSSSRR). A compositionally biased stretch (low complexity) spans 107–116 (GRPSVCSGSS). HTH OST-type domains lie at 127 to 202 (VPPI…LKRS) and 300 to 374 (INPE…FDAN). Residues 530–589 (FIQPGHLCCVRISEDKWWYRVIIHRVLGKQEVEVFYPDFGNIGTVQKSSLRFLKWCYTKL) enclose the Tudor domain. 2 disordered regions span residues 818 to 846 (EELS…DSPT) and 889 to 915 (STTP…LKND). Over residues 823 to 845 (QEKNIGTTRSQKQPNLESSSDSP) the composition is skewed to polar residues. Residue Ser897 is modified to Phosphoserine. The span at 904-915 (SVESSPESLKND) shows a compositional bias: polar residues.

Belongs to the TDRD5 family.

The protein localises to the cytoplasm. In terms of biological role, required during spermiogenesis to participate in the repression transposable elements and prevent their mobilization, which is essential for the germline integrity. Probably acts via the piRNA metabolic process, which mediates the repression of transposable elements during meiosis by forming complexes composed of piRNAs and Piwi proteins and govern the methylation and subsequent repression of transposons. Required for chromatoid body (CB) assembly. In Canis lupus familiaris (Dog), this protein is Tudor domain-containing protein 5 (TDRD5).